The primary structure comprises 464 residues: L-aspartate oxidase (464 aa).

FAD is bound by residues serine 8–alanine 11 and asparagine 37–glycine 44. Catalysis depends on arginine 248, which acts as the Proton donor/acceptor. FAD is bound by residues glutamate 329 and serine 345–leucine 346.

The protein belongs to the FAD-dependent oxidoreductase 2 family. NadB subfamily. Requires FAD as cofactor.

It is found in the cytoplasm. The catalysed reaction is L-aspartate + O2 = iminosuccinate + H2O2. The protein operates within cofactor biosynthesis; NAD(+) biosynthesis; iminoaspartate from L-aspartate (oxidase route): step 1/1. In terms of biological role, catalyzes the oxidation of L-aspartate to iminoaspartate, the first step in the de novo biosynthesis of NAD(+). The polypeptide is L-aspartate oxidase (nadB) (Pyrococcus furiosus (strain ATCC 43587 / DSM 3638 / JCM 8422 / Vc1)).